Here is a 483-residue protein sequence, read N- to C-terminus: ATP-dependent RNA helicase DDX25 (483 aa).

The Nuclear export signal signature appears at 61–74 (LAANSLLNKLIRQS). The Q motif signature appears at 97 to 125 (KTFEELRLKEELLKGIYAMGFNRPSKIQE). Residues 100-114 (EELRLKEELLKGIYA) carry the Nuclear localization signal motif. A Helicase ATP-binding domain is found at 130 to 300 (MMLAHPPQNL…ERIIPDPNVI (171 aa)). 143–150 (SQSGTGKT) serves as a coordination point for ATP. The DEAD box signature appears at 247-250 (DEAD). In terms of domain architecture, Helicase C-terminal spans 311 to 478 (NIRQYYVLCG…QLDPEDMDEI (168 aa)).

The protein belongs to the DEAD box helicase family. Post-translationally, phosphorylated on threonine residues. The phosphorylated form is found in the cytoplasm but not in the nucleus.

The protein resides in the cytoplasm. It is found in the nucleus. It carries out the reaction ATP + H2O = ADP + phosphate + H(+). ATP-dependent RNA helicase. Required for mRNA export and translation regulation during spermatid development. The sequence is that of ATP-dependent RNA helicase DDX25 (DDX25) from Bos taurus (Bovine).